The following is a 129-amino-acid chain: UPF0102 protein Ctha_1382 (129 aa).

Belongs to the UPF0102 family.

The polypeptide is UPF0102 protein Ctha_1382 (Chloroherpeton thalassium (strain ATCC 35110 / GB-78)).